Here is a 352-residue protein sequence, read N- to C-terminus: Uroporphyrinogen decarboxylase (352 aa).

Residues 26-30 (RQAGR), Asp76, Tyr153, Ser208, and His323 each bind substrate.

Belongs to the uroporphyrinogen decarboxylase family. As to quaternary structure, homodimer.

The protein localises to the cytoplasm. The enzyme catalyses uroporphyrinogen III + 4 H(+) = coproporphyrinogen III + 4 CO2. It functions in the pathway porphyrin-containing compound metabolism; protoporphyrin-IX biosynthesis; coproporphyrinogen-III from 5-aminolevulinate: step 4/4. Its function is as follows. Catalyzes the decarboxylation of four acetate groups of uroporphyrinogen-III to yield coproporphyrinogen-III. This chain is Uroporphyrinogen decarboxylase, found in Synechococcus sp. (strain CC9605).